The sequence spans 98 residues: NADH-ubiquinone oxidoreductase chain 4L (98 aa).

3 helical membrane passes run 1–21 (MSPL…GLAF), 26–46 (LISA…PLSI), and 56–76 (FALV…TGLA).

This sequence belongs to the complex I subunit 4L family. Core subunit of respiratory chain NADH dehydrogenase (Complex I) which is composed of 45 different subunits.

The protein resides in the mitochondrion inner membrane. The enzyme catalyses a ubiquinone + NADH + 5 H(+)(in) = a ubiquinol + NAD(+) + 4 H(+)(out). Core subunit of the mitochondrial membrane respiratory chain NADH dehydrogenase (Complex I) which catalyzes electron transfer from NADH through the respiratory chain, using ubiquinone as an electron acceptor. Part of the enzyme membrane arm which is embedded in the lipid bilayer and involved in proton translocation. This chain is NADH-ubiquinone oxidoreductase chain 4L (MT-ND4L), found in Gallus gallus (Chicken).